A 144-amino-acid polypeptide reads, in one-letter code: MVASMATTYELRIYGNVECAEFIDKVESLGKLLDVNGVVYVYKDSVRILANFPNEKKRQLFKEIIKDLEDDGGLIKVERIEERDLNTYIEFPNGLNKISTNELKEINKKLDKTISYLENIFNALEKQIKVSEEIRDILKDTFEV.

Residues 8 to 100 (TYELRIYGNV…FPNGLNKIST (93 aa)) enclose the Acylphosphatase-like domain.

This Methanocaldococcus jannaschii (strain ATCC 43067 / DSM 2661 / JAL-1 / JCM 10045 / NBRC 100440) (Methanococcus jannaschii) protein is Acylphosphatase-like protein MJ1331.